A 218-amino-acid chain; its full sequence is Ras-related protein Rab-11B (218 aa).

Gly2 carries the N-acetylglycine modification. Arg4 carries the post-translational modification Citrulline. 11 residues coordinate GTP: Ser20, Gly21, Gly23, Lys24, Ser25, Asn26, Asn37, Leu38, Ser40, Ser42, and Thr43. Residue Ser25 coordinates Mg(2+). Residues 36-47 (FNLESKSTIGVE) carry the Switch 1 motif. The Mg(2+) site is built by Thr43 and Asp66. The short motif at 67 to 86 (TAGQERYRAITSAYYRGAVG) is the Switch 2 element. 6 residues coordinate GTP: Gly69, Asn124, Lys125, Asp127, Ala155, and Leu156. The segment at 184 to 218 (RAAHDESPGNNVVDISVPPTTDGQKPNKLQCCQNL) is disordered. 2 S-geranylgeranyl cysteine lipidation sites follow: Cys214 and Cys215. Cys215 is subject to Cysteine methyl ester. Positions 216–218 (QNL) are cleaved as a propeptide — removed in mature form.

The protein belongs to the small GTPase superfamily. Rab family. Interacts with KCNMA1. Interacts with RAB11FIP1, RAB11FIP2, RAB11FIP3 and RAB11FIP4. May interact with TBC1D14. Interacts with ATP6V1E1. Interacts with PI4KB. Interacts (GDP-bound form) with ZFYVE27. Interacts (GDP-bound form) with KIF5A in a ZFYVE27-dependent manner. Interacts with RELCH. Interacts (in GTP-bound form) with TBC1D8B (via domain Rab-GAP TBC). Forms a complex containing RAB11B, ASAP1, Rabin8/RAB3IP, RAP11FIP3 and ARF4. Interacts with WDR44. The cofactor is Mg(2+). In terms of processing, citrullinated by PADI4. Post-translationally, (Microbial infection) Glycosylated on arginine residues by S.typhimurium protein Ssek3.

It localises to the recycling endosome membrane. It is found in the cytoplasmic vesicle. The protein localises to the secretory vesicle. Its subcellular location is the synaptic vesicle membrane. The protein resides in the phagosome membrane. The enzyme catalyses GTP + H2O = GDP + phosphate + H(+). With respect to regulation, regulated by guanine nucleotide exchange factors (GEFs) which promote the exchange of bound GDP for free GTP. Regulated by GTPase activating proteins (GAPs) which increase the GTP hydrolysis activity. Inhibited by GDP dissociation inhibitors (GDIs) which prevent Rab-GDP dissociation. In terms of biological role, the small GTPases Rab are key regulators of intracellular membrane trafficking, from the formation of transport vesicles to their fusion with membranes. Rabs cycle between an inactive GDP-bound form and an active GTP-bound form that is able to recruit to membranes different set of downstream effectors directly responsible for vesicle formation, movement, tethering and fusion. The small Rab GTPase RAB11B plays a role in endocytic recycling, regulating apical recycling of several transmembrane proteins including cystic fibrosis transmembrane conductance regulator/CFTR, epithelial sodium channel/ENaC, potassium voltage-gated channel, and voltage-dependent L-type calcium channel. May also regulate constitutive and regulated secretion, like insulin granule exocytosis. Required for melanosome transport and release from melanocytes. Also regulates V-ATPase intracellular transport in response to extracellular acidosis. Promotes Rabin8/RAB3IP preciliary vesicular trafficking to mother centriole by forming a ciliary targeting complex containing Rab11, ASAP1, Rabin8/RAB3IP, RAB11FIP3 and ARF4, thereby regulating ciliogenesis initiation. On the contrary, upon LPAR1 receptor signaling pathway activation, interaction with phosphorylated WDR44 prevents Rab11-RAB3IP-RAB11FIP3 complex formation and cilia growth. This chain is Ras-related protein Rab-11B, found in Homo sapiens (Human).